A 179-amino-acid polypeptide reads, in one-letter code: Interferon lambda-4 (179 aa).

Residues 1 to 21 form the signal peptide; sequence MRPSVWAAVAAGLWVLCTVIA. The segment at 130–149 is disordered; sequence SSRKVPGAQKRRHKPRRADS.

Belongs to the lambda interferon family.

It is found in the cytoplasm. The protein resides in the secreted. In terms of biological role, cytokine that may trigger an antiviral response activating the JAK-STAT pathway and up-regulating specifically some interferon-stimulated genes. The sequence is that of Interferon lambda-4 (IFNL4) from Homo sapiens (Human).